The following is a 1083-amino-acid chain: Integrator complex subunit 3 homolog (1083 aa).

Disordered stretches follow at residues 551 to 579, 929 to 953, and 1014 to 1083; these read NEAVFSDDENLPSTSKNEENTDDDDDLPL, YPSSSPNKRKRPSKGSSAASSTPSA, and AVGR…NDSD. Positions 942–953 are enriched in low complexity; it reads KGSSAASSTPSA. 4 positions are modified to phosphoserine: Ser-1053, Ser-1054, Ser-1058, and Ser-1059. Residues 1066-1077 show a composition bias toward basic residues; the sequence is HKVTQPAKKRKK.

Belongs to the Integrator subunit 3 family. As to quaternary structure, belongs to the multiprotein complex Integrator, at least composed of IntS1, IntS2, IntS3, IntS4, omd/IntS5, IntS6, defl/IntS7, IntS8, IntS9, IntS10, IntS11, IntS12, asun/IntS13, IntS14 and IntS15. The core complex associates with protein phosphatase 2A subunits mts/PP2A and Pp2A-29B, to form the Integrator-PP2A (INTAC) complex.

It localises to the nucleus. It is found in the cytoplasm. Component of the integrator complex, a multiprotein complex that terminates RNA polymerase II (Pol II) transcription in the promoter-proximal region of genes. The integrator complex provides a quality checkpoint during transcription elongation by driving premature transcription termination of transcripts that are unfavorably configured for transcriptional elongation: the complex terminates transcription by (1) catalyzing dephosphorylation of the C-terminal domain (CTD) of Pol II subunit Polr2A/Rbp1 and Spt5, and (2) degrading the exiting nascent RNA transcript via endonuclease activity. The integrator complex is also involved in the 3'-end processing of the U7 snRNA, and also the spliceosomal snRNAs U1, U2, U4 and U5. This chain is Integrator complex subunit 3 homolog (IntS3), found in Drosophila grimshawi (Hawaiian fruit fly).